The chain runs to 115 residues: Ribosome-binding factor A (115 aa).

Belongs to the RbfA family. Monomer. Binds 30S ribosomal subunits, but not 50S ribosomal subunits or 70S ribosomes.

It localises to the cytoplasm. In terms of biological role, one of several proteins that assist in the late maturation steps of the functional core of the 30S ribosomal subunit. Associates with free 30S ribosomal subunits (but not with 30S subunits that are part of 70S ribosomes or polysomes). Required for efficient processing of 16S rRNA. May interact with the 5'-terminal helix region of 16S rRNA. The chain is Ribosome-binding factor A from Staphylococcus carnosus (strain TM300).